The following is a 1174-amino-acid chain: DNA-directed RNA polymerase subunit beta' (1174 aa).

Zn(2+) is bound by residues C60, C62, C75, and C78. Mg(2+)-binding residues include D450, D452, and D454. The Zn(2+) site is built by C795, C869, C876, and C879.

The protein belongs to the RNA polymerase beta' chain family. As to quaternary structure, the RNAP catalytic core consists of 2 alpha, 1 beta, 1 beta' and 1 omega subunit. When a sigma factor is associated with the core the holoenzyme is formed, which can initiate transcription. Requires Mg(2+) as cofactor. The cofactor is Zn(2+).

The enzyme catalyses RNA(n) + a ribonucleoside 5'-triphosphate = RNA(n+1) + diphosphate. Its function is as follows. DNA-dependent RNA polymerase catalyzes the transcription of DNA into RNA using the four ribonucleoside triphosphates as substrates. This is DNA-directed RNA polymerase subunit beta' from Clostridium kluyveri (strain ATCC 8527 / DSM 555 / NBRC 12016 / NCIMB 10680 / K1).